We begin with the raw amino-acid sequence, 286 residues long: Translocon-associated protein subunit alpha (286 aa).

Positions 1-21 (MRLLPRLLLLFLLAFPAAVLL) are cleaved as a signal peptide. The Lumenal segment spans residues 22–207 (RGGPGGSLAL…EREDGLDGET (186 aa)). Positions 46 to 75 (IIEDEDDEAEVEEDEPTDLAEDKEEEDVSS) are enriched in acidic residues. The disordered stretch occupies residues 46-83 (IIEDEDDEAEVEEDEPTDLAEDKEEEDVSSEPEASPSA). N-linked (GlcNAc...) asparagine glycans are attached at residues N136 and N191. The chain crosses the membrane as a helical span at residues 208–228 (IFMYMFLAGLGLLVVVGLHQL). Topologically, residues 229 to 286 (LESRKRKRPIQKVEMGTSSQNDVDMSWIPQETLNQINKASPRRQPRKRAQKRSVGSDE) are cytoplasmic. The disordered stretch occupies residues 236 to 286 (RPIQKVEMGTSSQNDVDMSWIPQETLNQINKASPRRQPRKRAQKRSVGSDE). Polar residues predominate over residues 244–266 (GTSSQNDVDMSWIPQETLNQINK). At S247 the chain carries Phosphoserine. Residue T260 is modified to Phosphothreonine. S268 is subject to Phosphoserine. A compositionally biased stretch (basic residues) spans 268-279 (SPRRQPRKRAQK).

This sequence belongs to the TRAP-alpha family. As to quaternary structure, heterotetramer of TRAP-alpha, TRAP-beta, TRAP-delta and TRAP-gamma. Interacts with palmitoylated calnexin (CALX), the interaction is required for efficient folding of glycosylated proteins.

It is found in the endoplasmic reticulum membrane. Its function is as follows. TRAP proteins are part of a complex whose function is to bind calcium to the ER membrane and thereby regulate the retention of ER resident proteins. May be involved in the recycling of the translocation apparatus after completion of the translocation process or may function as a membrane-bound chaperone facilitating folding of translocated proteins. The protein is Translocon-associated protein subunit alpha (Ssr1) of Mus musculus (Mouse).